A 259-amino-acid polypeptide reads, in one-letter code: Cell division protein FtsQ (259 aa).

Topologically, residues 1-15 are cytoplasmic; it reads MTRDQTATFGRHALR. Residues 16 to 36 form a helical membrane-spanning segment; it reads VAGSGLLVAGVVALGLLGWQW. Topologically, residues 37–259 are periplasmic; the sequence is RANVTVDRVA…VVTRTRPLDG (223 aa). Positions 40–109 constitute a POTRA domain; it reads VTVDRVAVTG…GALTISVTER (70 aa).

Belongs to the FtsQ/DivIB family. FtsQ subfamily.

It is found in the cell inner membrane. In terms of biological role, essential cell division protein. The protein is Cell division protein FtsQ of Salinibacter ruber (strain DSM 13855 / M31).